A 471-amino-acid chain; its full sequence is Phosphatidate cytidylyltransferase 3 (471 aa).

The interval 1-72 (MAMEKDLSPN…HRRRSSENLA (72 aa)) is disordered. Residues 21-35 (SYPTTPTSRMNTNNQ) show a composition bias toward polar residues. The next 8 membrane-spanning stretches (helical) occupy residues 97 to 116 (WIRTCSSLWMLGGVVFIIYM), 120 to 139 (YIWAMVVVIQIFMAKELFFL), 149 to 169 (LPGFWLLNWHFFFTAMLFVYG), 196 to 216 (YQMVICYFLYIAGLIWFILTL), 228 to 250 (YAWTHMILIVVFTQSSFTVANIF), 255 to 277 (WFLLPAALIAMNDVAAYFFGFYF), 293 to 313 (GFIGASVATIISAFIFANVLG), and 368 to 388 (FSLGLFASIMAPFGGFFASGF).

The protein belongs to the CDS family. Requires Mg(2+) as cofactor.

The protein localises to the membrane. The enzyme catalyses a 1,2-diacyl-sn-glycero-3-phosphate + CTP + H(+) = a CDP-1,2-diacyl-sn-glycerol + diphosphate. It functions in the pathway phospholipid metabolism; CDP-diacylglycerol biosynthesis; CDP-diacylglycerol from sn-glycerol 3-phosphate: step 3/3. Its function is as follows. May be involved in the synthesis of minor phospholipids and in modulation of IP3-mediated signal transduction. This chain is Phosphatidate cytidylyltransferase 3, found in Arabidopsis thaliana (Mouse-ear cress).